We begin with the raw amino-acid sequence, 434 residues long: Transcription initiation factor IIE subunit alpha (434 aa).

The HTH TFE/IIEalpha-type domain maps to 8–99 (VQRLIKMIMR…DFCSTIDSIK (92 aa)). Residues 124 to 151 (CPFCNKKFSSLDVLSLVTNEGTFACNVC) form a C4-type zinc finger. Disordered regions lie at residues 217 to 251 (QQNL…EKRE), 357 to 408 (STDY…EMQE), and 415 to 434 (INGF…FEDV). A compositionally biased stretch (polar residues) spans 226–238 (DVRLSTSSPSITV). 2 stretches are compositionally biased toward basic and acidic residues: residues 241–251 (SADKETDEKRE) and 376–385 (IQNKRTKSIE). Polar residues predominate over residues 386-399 (ENNSLPPIVSTNGI). Residues 419–434 (NEDDEDDEDEADFEDV) show a composition bias toward acidic residues.

It belongs to the TFIIE alpha subunit family. As to quaternary structure, TFIIE is a tetramer of two alpha (tfa1) and two beta (tfa2) subunits.

The protein localises to the nucleus. Its function is as follows. Recruits TFIIH to the initiation complex and stimulates the RNA polymerase II C-terminal domain kinase and DNA-dependent ATPase activities of TFIIH. Both TFIIH and TFIIE are required for promoter clearance by RNA polymerase. In Schizosaccharomyces pombe (strain 972 / ATCC 24843) (Fission yeast), this protein is Transcription initiation factor IIE subunit alpha (tfa1).